The following is a 220-amino-acid chain: RNA-free ribonuclease P (220 aa).

The protein belongs to the HARP family.

The catalysed reaction is Endonucleolytic cleavage of RNA, removing 5'-extranucleotides from tRNA precursor.. Its function is as follows. RNA-free RNase P that catalyzes the removal of the 5'-leader sequence from pre-tRNA to produce the mature 5'-terminus. This Methanothermobacter thermautotrophicus (strain ATCC 29096 / DSM 1053 / JCM 10044 / NBRC 100330 / Delta H) (Methanobacterium thermoautotrophicum) protein is RNA-free ribonuclease P.